Reading from the N-terminus, the 130-residue chain is Small ribosomal subunit protein uS8 (130 aa).

It belongs to the universal ribosomal protein uS8 family. In terms of assembly, part of the 30S ribosomal subunit.

Functionally, one of the primary rRNA binding proteins, it binds directly to 16S rRNA central domain where it helps coordinate assembly of the platform of the 30S subunit. This is Small ribosomal subunit protein uS8 from Thermococcus onnurineus (strain NA1).